The primary structure comprises 170 residues: dCTP pyrophosphatase 1 (170 aa).

The interval 1–27 (MSVAGGEIRGDTGGEDTAAPGRFSFSP) is disordered. Residue serine 2 is modified to N-acetylserine. The residue at position 2 (serine 2) is a Phosphoserine. Residue threonine 12 is modified to Phosphothreonine. Substrate-binding positions include histidine 38 and 47 to 51 (WEQFH). Residues glutamate 63 and glutamate 66 each contribute to the Mg(2+) site. Tryptophan 73 is a binding site for substrate. At serine 85 the chain carries Phosphoserine. The Mg(2+) site is built by glutamate 95 and aspartate 98. Tyrosine 102 lines the substrate pocket. Residues 147–170 (GAISEDQAVGPADIPCDSTGQTST) are disordered.

In terms of assembly, homotetramer. Mg(2+) is required as a cofactor.

Its subcellular location is the mitochondrion. The protein localises to the nucleus. It localises to the cytoplasm. The protein resides in the cytosol. The enzyme catalyses dCTP + H2O = dCMP + diphosphate + H(+). With respect to regulation, inhibited by the reaction end product PPi. Inhibited by dCDP. Inhibited by triptolide. Functionally, hydrolyzes deoxynucleoside triphosphates (dNTPs) to the corresponding nucleoside monophosphates. Has a strong preference for dCTP and its analogs including 5-iodo-dCTP and 5-methyl-dCTP for which it may even have a higher efficiency. May protect DNA or RNA against the incorporation of these genotoxic nucleotide analogs through their catabolism. This chain is dCTP pyrophosphatase 1, found in Homo sapiens (Human).